The following is a 341-amino-acid chain: Glycerol-3-phosphate dehydrogenase [NAD(P)+] (341 aa).

NADPH-binding residues include Ser-14, Phe-15, Arg-35, and Lys-108. Sn-glycerol 3-phosphate is bound by residues Lys-108 and Gly-136. Ala-140 contributes to the NADPH binding site. Residues Lys-191, Asp-244, Ser-254, Arg-255, and Asn-256 each coordinate sn-glycerol 3-phosphate. Lys-191 (proton acceptor) is an active-site residue. Arg-255 contributes to the NADPH binding site. NADPH contacts are provided by Val-279 and Glu-281.

Belongs to the NAD-dependent glycerol-3-phosphate dehydrogenase family.

Its subcellular location is the cytoplasm. It carries out the reaction sn-glycerol 3-phosphate + NAD(+) = dihydroxyacetone phosphate + NADH + H(+). The catalysed reaction is sn-glycerol 3-phosphate + NADP(+) = dihydroxyacetone phosphate + NADPH + H(+). Its pathway is membrane lipid metabolism; glycerophospholipid metabolism. Its function is as follows. Catalyzes the reduction of the glycolytic intermediate dihydroxyacetone phosphate (DHAP) to sn-glycerol 3-phosphate (G3P), the key precursor for phospholipid synthesis. In Pseudomonas fluorescens (strain ATCC BAA-477 / NRRL B-23932 / Pf-5), this protein is Glycerol-3-phosphate dehydrogenase [NAD(P)+].